Here is a 451-residue protein sequence, read N- to C-terminus: Glutamyl-tRNA reductase (451 aa).

Residues 47 to 50 (TCNR), Ser-132, 137 to 139 (EPQ), and Gln-143 each bind substrate. The active-site Nucleophile is Cys-48. 212–217 (AAGEMN) provides a ligand contact to NADP(+).

It belongs to the glutamyl-tRNA reductase family. In terms of assembly, homodimer.

It catalyses the reaction (S)-4-amino-5-oxopentanoate + tRNA(Glu) + NADP(+) = L-glutamyl-tRNA(Glu) + NADPH + H(+). It participates in porphyrin-containing compound metabolism; protoporphyrin-IX biosynthesis; 5-aminolevulinate from L-glutamyl-tRNA(Glu): step 1/2. Catalyzes the NADPH-dependent reduction of glutamyl-tRNA(Glu) to glutamate 1-semialdehyde (GSA). This is Glutamyl-tRNA reductase from Psychrobacter sp. (strain PRwf-1).